The sequence spans 281 residues: ATP phosphoribosyltransferase (281 aa).

This sequence belongs to the ATP phosphoribosyltransferase family. Long subfamily. The cofactor is Mg(2+).

The protein localises to the cytoplasm. The enzyme catalyses 1-(5-phospho-beta-D-ribosyl)-ATP + diphosphate = 5-phospho-alpha-D-ribose 1-diphosphate + ATP. Its pathway is amino-acid biosynthesis; L-histidine biosynthesis; L-histidine from 5-phospho-alpha-D-ribose 1-diphosphate: step 1/9. Feedback inhibited by histidine. In terms of biological role, catalyzes the condensation of ATP and 5-phosphoribose 1-diphosphate to form N'-(5'-phosphoribosyl)-ATP (PR-ATP). Has a crucial role in the pathway because the rate of histidine biosynthesis seems to be controlled primarily by regulation of HisG enzymatic activity. This Corynebacterium efficiens (strain DSM 44549 / YS-314 / AJ 12310 / JCM 11189 / NBRC 100395) protein is ATP phosphoribosyltransferase.